The sequence spans 205 residues: MGNIMDGKSVEELSSTECHQWYKKFMTECPSGQLTLYEFRQFFGLKNLSPWASQYVEQMFETFDFNKDGYIDFMEYVAALSLVLKGKVEQKLRWYFKLYDVDGNGCIDRDELLTIIRAIRAINPCSDSTMTAEEFTDTVFSKIDVNGDGELSLEEFMEGVQKDQMLLDTLTRSLDLTRIVRRLQNGEQDEEGASGRETEAAEADG.

The N-myristoyl glycine moiety is linked to residue glycine 2. Asparagine 3 carries the post-translational modification Deamidated asparagine. 4 consecutive EF-hand domains span residues 14–49, 51–86, 87–122, and 131–166; these read SSTE…KNLS, WASQ…VLKG, KVEQ…IRAI, and TAEE…DQML. Ca(2+)-binding residues include aspartate 64, asparagine 66, aspartate 68, tyrosine 70, glutamate 75, aspartate 100, aspartate 102, asparagine 104, cysteine 106, glutamate 111, aspartate 144, asparagine 146, aspartate 148, glutamate 150, and glutamate 155. The interval 185 to 205 is disordered; sequence NGEQDEEGASGRETEAAEADG.

Homodimer. In terms of tissue distribution, detected in the retina. Detected in rod and cone photoreceptor cells (at protein level). Also present in certain pinealocytes.

The protein resides in the membrane. It localises to the photoreceptor inner segment. The protein localises to the cell projection. It is found in the cilium. Its subcellular location is the photoreceptor outer segment. In terms of biological role, stimulates retinal guanylyl cyclase when free calcium ions concentration is low and inhibits guanylyl cyclase when free calcium ions concentration is elevated. This Ca(2+)-sensitive regulation of retinal guanylyl cyclase is a key event in recovery of the dark state of rod photoreceptors following light exposure. May be involved in cone photoreceptor light response and recovery of response in bright light. This is Guanylyl cyclase-activating protein 1 (GUCA1A) from Bos taurus (Bovine).